Here is a 303-residue protein sequence, read N- to C-terminus: ATP synthase gamma chain (303 aa).

The protein belongs to the ATPase gamma chain family. As to quaternary structure, F-type ATPases have 2 components, CF(1) - the catalytic core - and CF(0) - the membrane proton channel. CF(1) has five subunits: alpha(3), beta(3), gamma(1), delta(1), epsilon(1). CF(0) has three main subunits: a, b and c.

It localises to the cell membrane. In terms of biological role, produces ATP from ADP in the presence of a proton gradient across the membrane. The gamma chain is believed to be important in regulating ATPase activity and the flow of protons through the CF(0) complex. The sequence is that of ATP synthase gamma chain from Nocardioides sp. (strain ATCC BAA-499 / JS614).